The primary structure comprises 510 residues: MKLKPIEVAEILQKEIANINCLSELEEVGQVISVGDGIAKIYGLANVKSGEVVEFKSGVKGLVLNLENDSVGAVIMGDDNQVQQGDNVKRTKEVLEVPIGKALLGRVVDALGNPIDGKGDIASKEYRHIEMKAPGIIERTSVSEPVQTGIKAIDSLIPIGRGQRELIIGDRQTGKTAIAVDTIINQKQAHSLTNESDKIYCIYVAIGQKRSSVAQIVKKLEDAGAMDYTIVVSATASEAAALQFIAPYSACSMGEYFRDNGMHALIIYDDLSKHAVAYRQISLLLRRPPGREAYPGDVFYLHSRLLERAAKMSEEKGSGSLTALPIIETQAGDVSAYIPTNVISITDGQIFLESELFYKGVRPAVNVGISVSRVGSAAQIKAMKQVAGSVKLELAQFRELESFSQFGSDLDPATKAQIDHGKRLVEILKQAQYHPFPVEEQIVSIYVGTKKYLNDVPLQKVKEFEDKMLTEIRLNKKDILESIKNEQRITEETEQKLKAFLENFVKEFVK.

169-176 (GDRQTGKT) contacts ATP.

Belongs to the ATPase alpha/beta chains family. As to quaternary structure, F-type ATPases have 2 components, CF(1) - the catalytic core - and CF(0) - the membrane proton channel. CF(1) has five subunits: alpha(3), beta(3), gamma(1), delta(1), epsilon(1). CF(0) has three main subunits: a(1), b(2) and c(9-12). The alpha and beta chains form an alternating ring which encloses part of the gamma chain. CF(1) is attached to CF(0) by a central stalk formed by the gamma and epsilon chains, while a peripheral stalk is formed by the delta and b chains.

The protein resides in the cell inner membrane. The catalysed reaction is ATP + H2O + 4 H(+)(in) = ADP + phosphate + 5 H(+)(out). Its function is as follows. Produces ATP from ADP in the presence of a proton gradient across the membrane. The alpha chain is a regulatory subunit. The polypeptide is ATP synthase subunit alpha (Rickettsia felis (strain ATCC VR-1525 / URRWXCal2) (Rickettsia azadi)).